A 236-amino-acid chain; its full sequence is Leucyl/phenylalanyl-tRNA--protein transferase (236 aa).

The protein belongs to the L/F-transferase family.

It is found in the cytoplasm. It catalyses the reaction N-terminal L-lysyl-[protein] + L-leucyl-tRNA(Leu) = N-terminal L-leucyl-L-lysyl-[protein] + tRNA(Leu) + H(+). It carries out the reaction N-terminal L-arginyl-[protein] + L-leucyl-tRNA(Leu) = N-terminal L-leucyl-L-arginyl-[protein] + tRNA(Leu) + H(+). The catalysed reaction is L-phenylalanyl-tRNA(Phe) + an N-terminal L-alpha-aminoacyl-[protein] = an N-terminal L-phenylalanyl-L-alpha-aminoacyl-[protein] + tRNA(Phe). Functionally, functions in the N-end rule pathway of protein degradation where it conjugates Leu, Phe and, less efficiently, Met from aminoacyl-tRNAs to the N-termini of proteins containing an N-terminal arginine or lysine. This Yersinia pseudotuberculosis serotype O:1b (strain IP 31758) protein is Leucyl/phenylalanyl-tRNA--protein transferase.